Consider the following 170-residue polypeptide: Cathelicidin antimicrobial peptide (170 aa).

The signal sequence occupies residues 1 to 30 (MKTQRDSPSLGRWSLVLLLLGLVMPLAIVA). The propeptide at 31–131 (QVLSYQEAVL…DISCDKDNRR (101 aa)) is cathelin-like domain (CLD). 2 disulfides stabilise this stretch: C86–C97 and C108–C125. The interval 150–162 (FKRIVQRIKDFLQ) is active core.

Belongs to the cathelicidin family. In terms of assembly, monomer, homodimer or homotrimer (in vitro). Oligomerizes as tetra- or hexamer in solution (in vitro). Proteolytically cleaved by proteinase PRTN3 into antibacterial peptide LL-37. Proteolytically cleaved by cathepsin CTSG and neutrophil elastase ELANE. In terms of processing, resistant to proteolytic degradation in solution, and when bound to both zwitterionic (mimicking mammalian membranes) and negatively charged membranes (mimicking bacterial membranes). Post-translationally, after secretion onto the skin surface, the CAMP gene product is processed by a serine protease-dependent mechanism into multiple novel antimicrobial peptides distinct from and shorter than cathelicidin LL-37. These peptides show enhanced antimicrobial action, acquiring the ability to kill skin pathogens such as S.aureus, E.coli and C.albicans. These peptides have lost the ability to stimulate CXCL8/IL8 release from keratinocytes. The peptides act synergistically, killing bacteria at lower concentrations when present together, and maintain activity at increased salt condition.

It is found in the secreted. The protein resides in the vesicle. Functionally, antimicrobial protein that is an integral component of the innate immune system. Binds to bacterial lipopolysaccharides (LPS). Acts via neutrophil N-formyl peptide receptors to enhance the release of CXCL2. Postsecretory processing generates multiple cathelicidin antimicrobial peptides with various lengths which act as a topical antimicrobial defense in sweat on skin. The unprocessed precursor form, cathelicidin antimicrobial peptide, inhibits the growth of Gram-negative E.coli and E.aerogenes with efficiencies comparable to that of the mature peptide LL-37 (in vitro). In terms of biological role, antimicrobial peptide that is an integral component of the innate immune system. Binds to bacterial lipopolysaccharides (LPS). Causes membrane permeabilization by forming transmembrane pores (in vitro). Causes lysis of E.coli. Exhibits antimicrobial activity against Gram-negative bacteria such as P.aeruginosa, S.typhimurium, E.aerogenes, E.coli and P.syringae, Gram-positive bacteria such as L.monocytogenes, S.epidermidis, S.pyogenes and S.aureus, as well as vancomycin-resistant enterococci (in vitro). Exhibits antimicrobial activity against methicillin-resistant S.aureus, P.mirabilis, and C.albicans in low-salt media, but not in media containing 100 mM NaCl (in vitro). Forms chiral supramolecular assemblies with quinolone signal (PQS) molecules of P.aeruginosa, which may lead to interference of bacterial quorum signaling and perturbance of bacterial biofilm formation. May form supramolecular fiber-like assemblies on bacterial membranes. Induces cytokine and chemokine producation as well as TNF/TNFA and CSF2/GMCSF production in normal human keratinocytes. Exhibits hemolytic activity against red blood cells. Its function is as follows. Exhibits antimicrobial activity against E.coli and B.megaterium (in vitro). The chain is Cathelicidin antimicrobial peptide from Nomascus gabriellae (Red-cheeked gibbon).